The chain runs to 687 residues: MLAKSLGWLLAVSRRNYCMGSRTALASRPWSKHLADPQIDPTAYVHSFANVVGDVRIQPGVSVAPGSSIRADEGTPFWIGGNVLIQHGVVIHGLETGRVLGDDDQEYSVWIGPGTCVAHLALVHGPVYLGANCFIGFRSTVLNARVGDGAVVMMHSLVQDVEIPPNKLVPSGAMITQQHQADSLPDVQAGDRHFVQQIAAMHGQSASPTQGTDPTVCVLPESLPAVTPVTETPYINSIDNMSINSDITNQIRSLLAQGYGIGAEHANERRFKTKSWQSCGTADGFRPDQVIATVEGWLQEFAGEYVRLIGIDQGAKRRVVEVIIQRPGDVPGSPSRGTTTTKALSSGGSGRSAVAHQTGNLAGDSANQLRALLHQGYKIGLEYASARRFKTGSWLTGGTIGSHREGEALQELNRFLADHTNEYVRIIGIDPAGKRRVAEIVVHRPNGNGNGKPSSSSSSVGYKSAPVSSAGGSSAGGLTPEVIATVRGLLANGHSIGTEHTDKRRFKAKSWDTCPTIDGGREAEVLAKLEACLADHAGEYVRIIGIDRVGKRRVLEQIIQRPGDNVVAGRSPSSSSASTSSSASSNGFGSGNGGGYSNSAVRLDNSVVTQVRSLLAQGYKIGTEHTDKRRFKAKSWQSCAPITSTHESEVLRALEGCLADHNGEYVRLLGIDPTAKRRVLETIIQRP.

Residues 242 to 327 (SINSDITNQI…RVVEVIIQRP (86 aa)) are rbcS-like repeat 1, SSUL1. Disordered regions lie at residues 328 to 355 (GDVPGSPSRGTTTTKALSSGGSGRSAVA) and 442 to 476 (VHRPNGNGNGKPSSSSSSVGYKSAPVSSAGGSSAG). The span at 335 to 346 (SRGTTTTKALSS) shows a compositional bias: polar residues. Positions 366-445 (ANQLRALLHQ…RVAEIVVHRP (80 aa)) are rbcS-like repeat 2, SSUL2. A compositionally biased stretch (low complexity) spans 451-472 (GKPSSSSSSVGYKSAPVSSAGG). Residues 480–562 (PEVIATVRGL…RVLEQIIQRP (83 aa)) form a rbcS-like repeat 3, SSUL3 region. The disordered stretch occupies residues 565-590 (NVVAGRSPSSSSASTSSSASSNGFGS). Over residues 568-587 (AGRSPSSSSASTSSSASSNG) the composition is skewed to low complexity. The tract at residues 599-687 (SAVRLDNSVV…RVLETIIQRP (89 aa)) is rbcS-like repeat 4, SSUL4.

This sequence belongs to the gamma-class carbonic anhydrase family. As to quaternary structure, probably forms homotrimers. Full length CcmM interacts with CcaA, CcmK1, CcmK2, CcmK4, CcmL, CcmN and itself, while the N-terminus of CcmM (first 249 residues) only interacts with CcaA, CcmM and CcmN. A probable CcmM-CcaA-CcmN complex as well as a CcaA-RuBisCO-CcmM complex can also be isolated. Interacts with full-length CcaA and the first 220 residues of CcaA; surface residues Gln-177 to Gln-188 are responsible in part for binding. Multiple forms of the protein of 73 (full length), 62, 52 (the most predominant form) and 36 kDa are seen even in the presence of protease inhibitors. CcmM52 interacts with CcaA.

It localises to the carboxysome. In terms of biological role, functions as a scaffold protein for the assembly of beta-carboxysomes, initiates carboxysome assembly via its N-terminal domain binding to CcaA, CcmK and CcmL. Binds HCO(3)-, suggesting it may play a role in the activity or regulation of bicarbonate dehydration. Also initiates carboxysome assembly by coalescing RuBisCO (ribulose bisphosphate carboxylase, rbcL-rbcS) via its SSU-like domains. Produced as a full-length and a shorter form; both forms are required for correct carboxysome assembly and growth. Despite its strong similarity to gamma-class carbonic anhydrase (CA) it does not have detectable CA activity. Beta-carboxysome assembly initiates when soluble RuBisCO is condensed into a liquid matrix in a pre-carboxysome by the RbcS-like domains of probably both forms of CcmM. CcmN interacts with the N-terminus of full length CcmM, and then recruits the shell proteins (CcmK) via CcmN's encapsulation peptide. CcmM73 also interacts with CcmK proteins and CcmL directly. Shell formation requires CcmK proteins and CcmO. CcmL caps the otherwise elongated carboxysome. Once fully encapsulated carboxysomes are formed, they migrate within the cell probably via interactions with the cytoskeleton. This Synechocystis sp. (strain ATCC 27184 / PCC 6803 / Kazusa) protein is Carboxysome assembly protein CcmM.